A 269-amino-acid polypeptide reads, in one-letter code: Thiazole synthase (269 aa).

The Schiff-base intermediate with DXP role is filled by Lys112. Residues Gly173, 199-200 (AG), and 221-222 (NT) each bind 1-deoxy-D-xylulose 5-phosphate.

This sequence belongs to the ThiG family. In terms of assembly, homotetramer. Forms heterodimers with either ThiH or ThiS.

It is found in the cytoplasm. It carries out the reaction [ThiS sulfur-carrier protein]-C-terminal-Gly-aminoethanethioate + 2-iminoacetate + 1-deoxy-D-xylulose 5-phosphate = [ThiS sulfur-carrier protein]-C-terminal Gly-Gly + 2-[(2R,5Z)-2-carboxy-4-methylthiazol-5(2H)-ylidene]ethyl phosphate + 2 H2O + H(+). It functions in the pathway cofactor biosynthesis; thiamine diphosphate biosynthesis. Functionally, catalyzes the rearrangement of 1-deoxy-D-xylulose 5-phosphate (DXP) to produce the thiazole phosphate moiety of thiamine. Sulfur is provided by the thiocarboxylate moiety of the carrier protein ThiS. In vitro, sulfur can be provided by H(2)S. The polypeptide is Thiazole synthase (Caulobacter vibrioides (strain ATCC 19089 / CIP 103742 / CB 15) (Caulobacter crescentus)).